We begin with the raw amino-acid sequence, 421 residues long: UDP-N-acetylglucosamine 1-carboxyvinyltransferase 2 (421 aa).

22-23 (KN) is a phosphoenolpyruvate binding site. Arg95 contacts UDP-N-acetyl-alpha-D-glucosamine. Cys119 serves as the catalytic Proton donor. Cys119 is subject to 2-(S-cysteinyl)pyruvic acid O-phosphothioketal. UDP-N-acetyl-alpha-D-glucosamine is bound by residues 124 to 128 (RPIEQ), Asp308, and Val330.

This sequence belongs to the EPSP synthase family. MurA subfamily.

The protein localises to the cytoplasm. The catalysed reaction is phosphoenolpyruvate + UDP-N-acetyl-alpha-D-glucosamine = UDP-N-acetyl-3-O-(1-carboxyvinyl)-alpha-D-glucosamine + phosphate. Its pathway is cell wall biogenesis; peptidoglycan biosynthesis. Functionally, cell wall formation. Adds enolpyruvyl to UDP-N-acetylglucosamine. In Staphylococcus haemolyticus (strain JCSC1435), this protein is UDP-N-acetylglucosamine 1-carboxyvinyltransferase 2.